The sequence spans 358 residues: MNSTESIPLAQSTVAGFTSELESLTPVPSNETTCENWREIHHLVFHVANVCFAVGLLIPTTLHLHMILLRVMLSLGCTLYVVWATLYRCALDVMIWNSVFLGINILHLSYLLYKKRPVKIEKELGGVYHRLFEPLRVPPDLFRRLTGQFCMIQTLKRGQVYATEDKTSVDDRLSILLKGRMKVSYRGHFLHNIYPCAFIDSPEFRSTQMHKGEKFQVTIVADDNCRFLCWSRERLTYFLESEPFLYEIFRYLIGKDITNKLYSLNDPTLNDKKVKKLEPQMSLCTQISMLEMRNSITSSSDGEDGLHHFLRGSSSTASLPMSSPQQRASAKMKPIEEGVEDDDEVFVSPDALKVHQLP.

Topologically, residues 1–48 (MNSTESIPLAQSTVAGFTSELESLTPVPSNETTCENWREIHHLVFHVA) are extracellular. N-linked (GlcNAc...) asparagine glycosylation is found at Asn-2 and Asn-30. A helical transmembrane segment spans residues 49-69 (NVCFAVGLLIPTTLHLHMILL). Arg-70 is a topological domain (cytoplasmic). The helical transmembrane segment at 71-91 (VMLSLGCTLYVVWATLYRCAL) threads the bilayer. Position 92 (Asp-92) is a topological domain, extracellular. A helical membrane pass occupies residues 93–113 (VMIWNSVFLGINILHLSYLLY). The required for interaction with CAV3 stretch occupies residues 93–115 (VMIWNSVFLGINILHLSYLLYKK). Residues 114–358 (KKRPVKIEKE…PDALKVHQLP (245 aa)) lie on the Cytoplasmic side of the membrane. The segment at 136 to 186 (RVPPDLFRRLTGQFCMIQTLKRGQVYATEDKTSVDDRLSILLKGRMKVSYR) is required for interaction with KCNK2. Residues Ser-295 and Ser-318 each carry the phosphoserine modification. Positions 313–323 (SSSTASLPMSS) are enriched in low complexity. Positions 313–350 (SSSTASLPMSSPQQRASAKMKPIEEGVEDDDEVFVSPD) are disordered.

The protein belongs to the popeye family. In terms of assembly, homodimer. Homodimerization requires the C-terminus cytoplasmic region. Interacts (via the C-terminus cytoplasmic tail) with TJP1. Interacts (via the C-terminus cytoplasmic tail) with ARHGEF25/GEFT (via the DH domain). Interacts (via the C-terminus cytoplasmic tail) with VAMP3. Interacts with KCNK2; the interaction enhances KCNK2 surface expression and is inhibited by cAMP. Interacts with CAV3. As to expression, expressed in epithelial cells, skeletal muscle, heart and intestinal smooth muscle (at protein level). Expressed in fetal and adult heart and skeletal muscle.

Its subcellular location is the lateral cell membrane. The protein localises to the cell junction. It localises to the tight junction. It is found in the membrane. The protein resides in the cell membrane. Its subcellular location is the sarcolemma. The protein localises to the caveola. Functionally, cell adhesion molecule involved in the establishment and/or maintenance of cell integrity. Involved in the formation and regulation of the tight junction (TJ) paracellular permeability barrier in epithelial cells. Plays a role in VAMP3-mediated vesicular transport and recycling of different receptor molecules through its interaction with VAMP3. Plays a role in the regulation of cell shape and movement by modulating the Rho-family GTPase activity through its interaction with ARHGEF25/GEFT. Induces primordial adhesive contact and aggregation of epithelial cells in a Ca(2+)-independent manner. Also involved in striated muscle regeneration and repair and in the regulation of cell spreading. Important for the maintenance of cardiac function. Plays a regulatory function in heart rate dynamics mediated, at least in part, through cAMP-binding and, probably, by increasing cell surface expression of the potassium channel KCNK2 and enhancing current density. Is a caveolae-associated protein important for the preservation of caveolae structural and functional integrity as well as for heart protection against ischemia injury. The protein is Popeye domain-containing protein 1 of Mus musculus (Mouse).